A 221-amino-acid polypeptide reads, in one-letter code: UPF0502 protein PA14_19450 (221 aa).

The protein belongs to the UPF0502 family.

This is UPF0502 protein PA14_19450 from Pseudomonas aeruginosa (strain UCBPP-PA14).